The chain runs to 622 residues: 1-deoxy-D-xylulose-5-phosphate synthase (622 aa).

Thiamine diphosphate is bound by residues histidine 74 and 115 to 117 (GHS). Aspartate 146 contacts Mg(2+). Thiamine diphosphate-binding positions include 147-148 (GA), asparagine 175, tyrosine 286, and glutamate 366. Asparagine 175 contacts Mg(2+).

The protein belongs to the transketolase family. DXPS subfamily. In terms of assembly, homodimer. It depends on Mg(2+) as a cofactor. Thiamine diphosphate serves as cofactor.

The enzyme catalyses D-glyceraldehyde 3-phosphate + pyruvate + H(+) = 1-deoxy-D-xylulose 5-phosphate + CO2. The protein operates within metabolic intermediate biosynthesis; 1-deoxy-D-xylulose 5-phosphate biosynthesis; 1-deoxy-D-xylulose 5-phosphate from D-glyceraldehyde 3-phosphate and pyruvate: step 1/1. Its function is as follows. Catalyzes the acyloin condensation reaction between C atoms 2 and 3 of pyruvate and glyceraldehyde 3-phosphate to yield 1-deoxy-D-xylulose-5-phosphate (DXP). This Carboxydothermus hydrogenoformans (strain ATCC BAA-161 / DSM 6008 / Z-2901) protein is 1-deoxy-D-xylulose-5-phosphate synthase.